The following is a 390-amino-acid chain: tRNA(Met) cytidine acetate ligase (390 aa).

Residues 7–20 (ITEYNPFHNGHIYH), Gly-101, Asn-152, and Arg-177 each bind ATP.

The protein belongs to the TmcAL family.

It localises to the cytoplasm. The enzyme catalyses cytidine(34) in elongator tRNA(Met) + acetate + ATP = N(4)-acetylcytidine(34) in elongator tRNA(Met) + AMP + diphosphate. In terms of biological role, catalyzes the formation of N(4)-acetylcytidine (ac(4)C) at the wobble position of elongator tRNA(Met), using acetate and ATP as substrates. First activates an acetate ion to form acetyladenylate (Ac-AMP) and then transfers the acetyl group to tRNA to form ac(4)C34. The polypeptide is tRNA(Met) cytidine acetate ligase (Leuconostoc mesenteroides subsp. mesenteroides (strain ATCC 8293 / DSM 20343 / BCRC 11652 / CCM 1803 / JCM 6124 / NCDO 523 / NBRC 100496 / NCIMB 8023 / NCTC 12954 / NRRL B-1118 / 37Y)).